The primary structure comprises 995 residues: Bifunctional glutamine synthetase adenylyltransferase/adenylyl-removing enzyme (995 aa).

The interval 1–487 is adenylyl removase; sequence MNVTKPATQR…LHAKLFYQPL (487 aa). The adenylyl transferase stretch occupies residues 492-995; it reads APAGLEIAGR…KAVVRKVFGS (504 aa).

The protein belongs to the GlnE family. It depends on Mg(2+) as a cofactor.

It carries out the reaction [glutamine synthetase]-O(4)-(5'-adenylyl)-L-tyrosine + phosphate = [glutamine synthetase]-L-tyrosine + ADP. The catalysed reaction is [glutamine synthetase]-L-tyrosine + ATP = [glutamine synthetase]-O(4)-(5'-adenylyl)-L-tyrosine + diphosphate. Involved in the regulation of glutamine synthetase GlnA, a key enzyme in the process to assimilate ammonia. When cellular nitrogen levels are high, the C-terminal adenylyl transferase (AT) inactivates GlnA by covalent transfer of an adenylyl group from ATP to specific tyrosine residue of GlnA, thus reducing its activity. Conversely, when nitrogen levels are low, the N-terminal adenylyl removase (AR) activates GlnA by removing the adenylyl group by phosphorolysis, increasing its activity. The regulatory region of GlnE binds the signal transduction protein PII (GlnB) which indicates the nitrogen status of the cell. The protein is Bifunctional glutamine synthetase adenylyltransferase/adenylyl-removing enzyme of Mycobacterium marinum (strain ATCC BAA-535 / M).